The primary structure comprises 372 residues: Glutamate 5-kinase (372 aa).

Lys-14 provides a ligand contact to ATP. Ser-54, Asp-141, and Asn-153 together coordinate substrate. Residues 173–174 (TD) and 215–221 (TGGMITK) each bind ATP. A PUA domain is found at 280 to 358 (AGRLLLDDGA…REIEAALGYI (79 aa)).

This sequence belongs to the glutamate 5-kinase family.

It localises to the cytoplasm. The catalysed reaction is L-glutamate + ATP = L-glutamyl 5-phosphate + ADP. The protein operates within amino-acid biosynthesis; L-proline biosynthesis; L-glutamate 5-semialdehyde from L-glutamate: step 1/2. Catalyzes the transfer of a phosphate group to glutamate to form L-glutamate 5-phosphate. In Chromobacterium violaceum (strain ATCC 12472 / DSM 30191 / JCM 1249 / CCUG 213 / NBRC 12614 / NCIMB 9131 / NCTC 9757 / MK), this protein is Glutamate 5-kinase.